The following is a 212-amino-acid chain: Probable GH family 25 lysozyme 2 (212 aa).

Residues 1–19 form the signal peptide; the sequence is MRFIALLISFFALLKVISA. The region spanning 20-212 is the Ch-type lysozyme domain; it reads ISGVDISSAS…GLGFDLNWYP (193 aa). Residues D24, D112, and E114 contribute to the active site.

Belongs to the glycosyl hydrolase 25 family.

Its subcellular location is the secreted. The enzyme catalyses Hydrolysis of (1-&gt;4)-beta-linkages between N-acetylmuramic acid and N-acetyl-D-glucosamine residues in a peptidoglycan and between N-acetyl-D-glucosamine residues in chitodextrins.. This chain is Probable GH family 25 lysozyme 2, found in Dictyostelium discoideum (Social amoeba).